The sequence spans 698 residues: Transferrin-binding protein B (698 aa).

Residues 1-20 form the signal peptide; that stretch reads MNNPLVNQAAMVLPVFLLSA. Cysteine 21 carries N-palmitoyl cysteine lipidation. The S-diacylglycerol cysteine moiety is linked to residue cysteine 21. Disordered regions lie at residues 33–58, 83–102, 294–324, 349–383, 428–479, and 669–698; these read VDTE…QKDQ, IKLS…KNPS, FSGK…SLSG, GSAK…SENS, ESGK…GDAN, and TKNA…KPVQ. A compositionally biased stretch (polar residues) spans 46–56; sequence DVSSEKPQAQK. Residues 299–315 show a composition bias toward basic and acidic residues; sequence EATDKPKNDGETKEHPF. Over residues 369–383 the composition is skewed to low complexity; sequence AAASNGAAGTSSENS. Over residues 460-476 the composition is skewed to polar residues; sequence QAGTAENGNPAASNTAG. Residues 671–686 are compositionally biased toward low complexity; that stretch reads NATDASGNGNSASSAT.

Belongs to the TbpB family. As to quaternary structure, binds only human holo-transferrin (TF), via the TF C-terminus. Forms a large complex with TbpA and TF. Interacts via its C-terminal domain with Slam1.

The protein localises to the cell outer membrane. It localises to the cell surface. Neisseria acquires iron by extracting it from serum transferrin (TF) in its human host. Acts as a TF receptor and is required for TF utilization. Involved in the initial capture of TF. Helps select only those TF molecules that can be used as an iron source and concentrates them on the cell surface, maintaining the iron-loaded status of the TF C-terminal lobe until its delivery to TbpA. In Neisseria meningitidis serogroup A / serotype 4A (strain DSM 15465 / Z2491), this protein is Transferrin-binding protein B.